Reading from the N-terminus, the 332-residue chain is Fructose-1,6-bisphosphatase class 1 (332 aa).

Mg(2+) contacts are provided by Glu89, Asp110, Leu112, and Asp113. Substrate-binding positions include 113 to 116 (DGSS), Asn206, Tyr239, 257 to 259 (YLY), and Lys269. Mg(2+) is bound at residue Glu275.

The protein belongs to the FBPase class 1 family. As to quaternary structure, homotetramer. Requires Mg(2+) as cofactor.

It localises to the cytoplasm. The enzyme catalyses beta-D-fructose 1,6-bisphosphate + H2O = beta-D-fructose 6-phosphate + phosphate. It participates in carbohydrate biosynthesis; gluconeogenesis. This chain is Fructose-1,6-bisphosphatase class 1, found in Klebsiella pneumoniae (strain 342).